The sequence spans 120 residues: Large ribosomal subunit protein bL19 (120 aa).

This sequence belongs to the bacterial ribosomal protein bL19 family.

Its function is as follows. This protein is located at the 30S-50S ribosomal subunit interface and may play a role in the structure and function of the aminoacyl-tRNA binding site. This Trichormus variabilis (strain ATCC 29413 / PCC 7937) (Anabaena variabilis) protein is Large ribosomal subunit protein bL19.